Here is a 72-residue protein sequence, read N- to C-terminus: DNA-directed RNA polymerase subunit omega (72 aa).

The protein belongs to the RNA polymerase subunit omega family. As to quaternary structure, the RNAP catalytic core consists of 2 alpha, 1 beta, 1 beta' and 1 omega subunit. When a sigma factor is associated with the core the holoenzyme is formed, which can initiate transcription.

The enzyme catalyses RNA(n) + a ribonucleoside 5'-triphosphate = RNA(n+1) + diphosphate. Promotes RNA polymerase assembly. Latches the N- and C-terminal regions of the beta' subunit thereby facilitating its interaction with the beta and alpha subunits. In Francisella philomiragia subsp. philomiragia (strain ATCC 25017 / CCUG 19701 / FSC 153 / O#319-036), this protein is DNA-directed RNA polymerase subunit omega.